A 230-amino-acid chain; its full sequence is ATP-dependent dethiobiotin synthetase BioD (230 aa).

12–17 (DIGKTH) provides a ligand contact to ATP. Thr-16 contacts Mg(2+). The active site involves Lys-37. Residue Ser-41 participates in substrate binding. Residues Asp-52, 115 to 118 (EGAG), and 175 to 176 (SE) each bind ATP. Mg(2+) contacts are provided by Asp-52 and Glu-115.

This sequence belongs to the dethiobiotin synthetase family. Homodimer. Requires Mg(2+) as cofactor.

It localises to the cytoplasm. The enzyme catalyses (7R,8S)-7,8-diammoniononanoate + CO2 + ATP = (4R,5S)-dethiobiotin + ADP + phosphate + 3 H(+). It functions in the pathway cofactor biosynthesis; biotin biosynthesis; biotin from 7,8-diaminononanoate: step 1/2. Functionally, catalyzes a mechanistically unusual reaction, the ATP-dependent insertion of CO2 between the N7 and N8 nitrogen atoms of 7,8-diaminopelargonic acid (DAPA, also called 7,8-diammoniononanoate) to form a ureido ring. This chain is ATP-dependent dethiobiotin synthetase BioD, found in Caulobacter sp. (strain K31).